We begin with the raw amino-acid sequence, 158 residues long: Small ribosomal subunit protein uS7 (158 aa).

This sequence belongs to the universal ribosomal protein uS7 family. As to quaternary structure, part of the 30S ribosomal subunit. Contacts proteins S9 and S11.

One of the primary rRNA binding proteins, it binds directly to 16S rRNA where it nucleates assembly of the head domain of the 30S subunit. Is located at the subunit interface close to the decoding center, probably blocks exit of the E-site tRNA. This chain is Small ribosomal subunit protein uS7, found in Porphyromonas gingivalis (strain ATCC 33277 / DSM 20709 / CIP 103683 / JCM 12257 / NCTC 11834 / 2561).